The chain runs to 177 residues: ATP synthase subunit b, chloroplastic (177 aa).

The chain crosses the membrane as a helical span at residues 26–44 (IINLSIVLFVVIRFLGEAL).

The protein belongs to the ATPase B chain family. In terms of assembly, F-type ATPases have 2 components, F(1) - the catalytic core - and F(0) - the membrane proton channel. F(1) has five subunits: alpha(3), beta(3), gamma(1), delta(1), epsilon(1). F(0) has four main subunits: a(1), b(1), b'(1) and c(10-14). The alpha and beta chains form an alternating ring which encloses part of the gamma chain. F(1) is attached to F(0) by a central stalk formed by the gamma and epsilon chains, while a peripheral stalk is formed by the delta, b and b' chains.

The protein localises to the plastid. It is found in the chloroplast thylakoid membrane. F(1)F(0) ATP synthase produces ATP from ADP in the presence of a proton or sodium gradient. F-type ATPases consist of two structural domains, F(1) containing the extramembraneous catalytic core and F(0) containing the membrane proton channel, linked together by a central stalk and a peripheral stalk. During catalysis, ATP synthesis in the catalytic domain of F(1) is coupled via a rotary mechanism of the central stalk subunits to proton translocation. Its function is as follows. Component of the F(0) channel, it forms part of the peripheral stalk, linking F(1) to F(0). The protein is ATP synthase subunit b, chloroplastic of Bigelowiella natans (Pedinomonas minutissima).